A 309-amino-acid chain; its full sequence is Isethionate sulfite-lyase activating enzyme (309 aa).

The Radical SAM core domain maps to 22–309; that stretch reads HDGPGIRTVV…VVAAEHATDG (288 aa). [4Fe-4S] cluster contacts are provided by cysteine 36, cysteine 40, cysteine 43, cysteine 62, cysteine 68, cysteine 71, cysteine 75, cysteine 95, cysteine 98, cysteine 102, and cysteine 106. 42–44 lines the S-adenosyl-L-methionine pocket; it reads WCS. 4Fe-4S ferredoxin-type domains lie at 53–85 and 86–117; these read IELAYNTGRCLTLTKCVRCVEVCTMNAITRADD and DTISIDRALCEECGMFCAEACPSKALITYGTT. Residues glycine 146, 195-197, and histidine 268 each bind S-adenosyl-L-methionine; that span reads DIK.

The protein belongs to the organic radical-activating enzymes family. In terms of assembly, monomer. [4Fe-4S] cluster is required as a cofactor.

The catalysed reaction is glycyl-[protein] + reduced [flavodoxin] + S-adenosyl-L-methionine = glycin-2-yl radical-[protein] + semiquinone [flavodoxin] + 5'-deoxyadenosine + L-methionine + H(+). It functions in the pathway organosulfur degradation; alkanesulfonate degradation. In terms of biological role, involved in an anaerobic respiration pathway that converts the sulfonate isethionate (2-hydroxyethanesulfonate) to ammonia, acetate and sulfide. Catalyzes activation of the isethionate sulfite-lyase IslA under anaerobic conditions by generation of an organic free radical on a glycine residue, via a homolytic cleavage of S-adenosyl-L-methionine (SAM). The sequence is that of Isethionate sulfite-lyase activating enzyme from Oleidesulfovibrio alaskensis (strain ATCC BAA-1058 / DSM 17464 / G20) (Desulfovibrio alaskensis).